The sequence spans 362 residues: S-adenosylmethionine:tRNA ribosyltransferase-isomerase (362 aa).

The protein belongs to the QueA family. Monomer.

It is found in the cytoplasm. It carries out the reaction 7-aminomethyl-7-carbaguanosine(34) in tRNA + S-adenosyl-L-methionine = epoxyqueuosine(34) in tRNA + adenine + L-methionine + 2 H(+). It participates in tRNA modification; tRNA-queuosine biosynthesis. Functionally, transfers and isomerizes the ribose moiety from AdoMet to the 7-aminomethyl group of 7-deazaguanine (preQ1-tRNA) to give epoxyqueuosine (oQ-tRNA). The sequence is that of S-adenosylmethionine:tRNA ribosyltransferase-isomerase from Syntrophus aciditrophicus (strain SB).